Consider the following 261-residue polypeptide: Chanoclavine-I dehydrogenase easD (261 aa).

The N-terminal stretch at 1-20 (MPSMTSKVFAITGGASGIGA) is a signal peptide. Isoleucine 18 is a binding site for NADP(+). The N-linked (GlcNAc...) asparagine glycan is linked to asparagine 43. Residues aspartate 66, arginine 132, tyrosine 166, lysine 170, and threonine 201 each coordinate NADP(+). The active-site Proton donor is tyrosine 166. Lysine 170 functions as the Lowers pKa of active site Tyr in the catalytic mechanism.

This sequence belongs to the short-chain dehydrogenases/reductases (SDR) family. In terms of assembly, homotetramer.

It carries out the reaction chanoclavine-I + NAD(+) = chanoclavine-I aldehyde + NADH + H(+). The protein operates within alkaloid biosynthesis; ergot alkaloid biosynthesis. Chanoclavine-I dehydrogenase; part of the gene cluster that mediates the biosynthesis of fungal ergot alkaloid. DmaW catalyzes the first step of ergot alkaloid biosynthesis by condensing dimethylallyl diphosphate (DMAP) and tryptophan to form 4-dimethylallyl-L-tryptophan. The second step is catalyzed by the methyltransferase easF that methylates 4-dimethylallyl-L-tryptophan in the presence of S-adenosyl-L-methionine, resulting in the formation of 4-dimethylallyl-L-abrine. The catalase easC and the FAD-dependent oxidoreductase easE then transform 4-dimethylallyl-L-abrine to chanoclavine-I which is further oxidized by easD in the presence of NAD(+), resulting in the formation of chanoclavine-I aldehyde. Agroclavine dehydrogenase easG then mediates the conversion of chanoclavine-I aldehyde to agroclavine via a non-enzymatic adduct reaction: the substrate is an iminium intermediate that is formed spontaneously from chanoclavine-I aldehyde in the presence of glutathione. The presence of easA is not required to complete this reaction. Further conversion of agroclavine to paspalic acid is a two-step process involving oxidation of agroclavine to elymoclavine and of elymoclavine to paspalic acid, the second step being performed by the elymoclavine oxidase cloA. Paspalic acid is then further converted to D-lysergic acid. Ergopeptines are assembled from D-lysergic acid and three different amino acids by the D-lysergyl-peptide-synthetases composed each of a monomudular and a trimodular nonribosomal peptide synthetase subunit. LpsB and lpsC encode the monomodular subunits responsible for D-lysergic acid activation and incorporation into the ergopeptine backbone. LpsA1 and A2 subunits encode the trimodular nonribosomal peptide synthetase assembling the tripeptide portion of ergopeptines. LpsA1 is responsible for formation of the major ergopeptine, ergotamine, and lpsA2 for alpha-ergocryptine, the minor ergopeptine of the total alkaloid mixture elaborated by C.purpurea. D-lysergyl-tripeptides are assembled by the nonribosomal peptide synthetases and released as N-(D-lysergyl-aminoacyl)-lactams. Cyclolization of the D-lysergyl-tripeptides is performed by the Fe(2+)/2-ketoglutarate-dependent dioxygenase easH which introduces a hydroxyl group into N-(D-lysergyl-aminoacyl)-lactam at alpha-C of the aminoacyl residue followed by spontaneous condensation with the terminal lactam carbonyl group. This Claviceps purpurea (strain 20.1) (Ergot fungus) protein is Chanoclavine-I dehydrogenase easD.